The primary structure comprises 344 residues: CRISPR-associated endonuclease Cas1 2 (344 aa).

Mn(2+) contacts are provided by Glu167, His235, and Glu250.

The protein belongs to the CRISPR-associated endonuclease Cas1 family. In terms of assembly, homodimer, forms a heterotetramer with a Cas2 homodimer. The cofactor is Mg(2+). Mn(2+) is required as a cofactor.

Functionally, CRISPR (clustered regularly interspaced short palindromic repeat), is an adaptive immune system that provides protection against mobile genetic elements (viruses, transposable elements and conjugative plasmids). CRISPR clusters contain spacers, sequences complementary to antecedent mobile elements, and target invading nucleic acids. CRISPR clusters are transcribed and processed into CRISPR RNA (crRNA). Acts as a dsDNA endonuclease. Involved in the integration of spacer DNA into the CRISPR cassette. The polypeptide is CRISPR-associated endonuclease Cas1 2 (Rhodospirillum rubrum (strain ATCC 11170 / ATH 1.1.1 / DSM 467 / LMG 4362 / NCIMB 8255 / S1)).